The sequence spans 362 residues: Probable cysteine protease RDL2 (362 aa).

A signal peptide spans 1–28 (MAATPIRVIVSALVILSVLLLSSSLGVA). The propeptide at 29–129 (TETEIERNET…ERYLYKEGDV (101 aa)) is activation peptide. A glycan (N-linked (GlcNAc...) asparagine) is linked at Asn36. 2 cysteine pairs are disulfide-bonded: Cys151–Cys194 and Cys185–Cys228. Cys154 is an active-site residue. Asn234 carries N-linked (GlcNAc...) asparagine glycosylation. Cys287 and Cys338 are joined by a disulfide. Residues His293 and Asn313 contribute to the active site.

It belongs to the peptidase C1 family.

Probable thiol protease. The sequence is that of Probable cysteine protease RDL2 from Arabidopsis thaliana (Mouse-ear cress).